Here is a 212-residue protein sequence, read N- to C-terminus: MSARRRGALKDKWKIKKWYEIITPDVFNNVSVGQTPADEAWKLIGRTVDTTLYDITGDFTYVHVHVYLQINKVDEEALKAYTIFKGHELARDYIRSLTRRKSSKIEGIFDVWTKDGYGLRITVDTFTAYRCQTSQKRAIRKIQKEVIEEMVPQMTLDEVINAMLFGDIAEEISNRARKIYPIRRTEIYKSKVLYMPSPEGPIKAVIVPKPPA.

The protein belongs to the eukaryotic ribosomal protein eS1 family.

This Ignicoccus hospitalis (strain KIN4/I / DSM 18386 / JCM 14125) protein is Small ribosomal subunit protein eS1.